The sequence spans 320 residues: Glutathione synthetase (320 aa).

The ATP-grasp domain occupies 130–315; sequence KIFTSWFPDL…ITGMLLDYIE (186 aa). 156–212 is an ATP binding site; that stretch reads WEKYQDIIIKPLDAMGGANIFRIKKNDPNFSVIVENMTNYERKYCMVQNYLPEIKLG. Mg(2+) is bound by residues Glu286 and Asn288.

Belongs to the prokaryotic GSH synthase family. Mg(2+) serves as cofactor. Requires Mn(2+) as cofactor.

The enzyme catalyses gamma-L-glutamyl-L-cysteine + glycine + ATP = glutathione + ADP + phosphate + H(+). The protein operates within sulfur metabolism; glutathione biosynthesis; glutathione from L-cysteine and L-glutamate: step 2/2. This chain is Glutathione synthetase, found in Buchnera aphidicola subsp. Acyrthosiphon pisum (strain APS) (Acyrthosiphon pisum symbiotic bacterium).